The sequence spans 1088 residues: RNA-directed RNA polymerase (1088 aa).

A RdRp catalytic domain is found at 501 to 687; the sequence is LSYGDVTRFL…AKRYIAGGKI (187 aa).

The protein belongs to the reoviridae RNA-directed RNA polymerase family. Interacts with VP3 (Potential). Interacts with VP2; this interaction activates VP1. Interacts with NSP5; this interaction is probably necessary for the formation of functional virus factories. Interacts with NSP2; this interaction is weak. Requires Mg(2+) as cofactor.

Its subcellular location is the virion. It carries out the reaction RNA(n) + a ribonucleoside 5'-triphosphate = RNA(n+1) + diphosphate. RNA-directed RNA polymerase that is involved in both transcription and genome replication. Together with VP3 capping enzyme, forms an enzyme complex positioned near the channels situated at each of the five-fold vertices of the core. Following infection, the outermost layer of the virus is lost, leaving a double-layered particle (DLP) made up of the core and VP6 shell. VP1 then catalyzes the transcription of fully conservative plus-strand genomic RNAs that are extruded through the DLP's channels into the cytoplasm where they function as mRNAs for translation of viral proteins. One copy of each of the viral (+)RNAs is also recruited during core assembly, together with newly synthesized polymerase complexes and VP2. The polymerase of these novo-formed particles catalyzes the synthesis of complementary minus-strands leading to dsRNA formation. To do so, the polymerase specifically recognizes and binds 4 bases 5'-UGUG-3' in the conserved 3'-sequence of plus-strand RNA templates. VP2 presumably activates the autoinhibited VP1-RNA complex to coordinate packaging and genome replication. Once dsRNA synthesis is complete, the polymerase switches to the transcriptional mode, thus providing secondary transcription. The chain is RNA-directed RNA polymerase from Homo sapiens (Human).